Here is an 89-residue protein sequence, read N- to C-terminus: Bacterial microcompartment shell vertex protein GrpN (89 aa).

In terms of domain architecture, BMV spans 1–83; sequence MYLGKVIGTV…IDAAVVGIVD (83 aa).

It belongs to the CcmL/EutN family. In terms of assembly, homopentamer with a small central pore.

Its subcellular location is the bacterial microcompartment. Functionally, probably forms vertices in the bacterial microcompartment (BMC) predicted to be involved in glycyl radical-based 1,2-propanediol metabolism in this organism. This chain is Bacterial microcompartment shell vertex protein GrpN, found in Rhodospirillum rubrum (strain F11).